The following is a 258-amino-acid chain: tRNA (guanine-N(7)-)-methyltransferase (258 aa).

S-adenosyl-L-methionine contacts are provided by residues Gly-76, 99–100, 132–133, and Leu-152; these read EI and NA. Residue Asp-155 is part of the active site. 230 to 232 contacts S-adenosyl-L-methionine; that stretch reads TEE.

This sequence belongs to the class I-like SAM-binding methyltransferase superfamily. TrmB family.

The protein resides in the nucleus. It carries out the reaction guanosine(46) in tRNA + S-adenosyl-L-methionine = N(7)-methylguanosine(46) in tRNA + S-adenosyl-L-homocysteine. Its pathway is tRNA modification; N(7)-methylguanine-tRNA biosynthesis. Its function is as follows. Catalyzes the formation of N(7)-methylguanine at position 46 (m7G46) in tRNA. This Brugia malayi (Filarial nematode worm) protein is tRNA (guanine-N(7)-)-methyltransferase.